The following is a 2157-amino-acid chain: Unconventional myosin-IXb (2157 aa).

Serine 2 is subject to N-acetylserine. The region spanning 15–114 (AAYHLHIYPQ…YYFLLQERNA (100 aa)) is the Ras-associating domain. Positions 146-953 (ADFDDLCNLP…ERQALQETLH (808 aa)) constitute a Myosin motor domain. An ATP-binding site is contributed by 239 to 246 (GESGSGKT). A disordered region spans residues 709–734 (AEKAAGMSSPGAQSHPEELPRGASTP). Serine 716 and serine 717 each carry phosphoserine. Positions 844–855 (KAEPFFIRCIRS) are actin-binding. The tract at residues 940 to 1044 (LKETERQALQ…CRGHLQRKSF (105 aa)) is neck or regulatory domain. 4 consecutive IQ domains span residues 957-977 (VRKI…RHFL), 979-1000 (MKRA…RALE), 1001-1023 (RTQA…LYRH), and 1024-1053 (QKQS…EKQK). A Phosphoserine modification is found at serine 1045. The tract at residues 1045–2157 (SQMISEKQKA…LPPASGQTNG (1113 aa)) is tail. A coiled-coil region spans residues 1046 to 1071 (QMISEKQKAEEKEREALEAARAGAEE). Disordered stretches follow at residues 1046 to 1298 (QMIS…TQIQ), 1320 to 1410 (AAAS…GSQV), and 1455 to 1484 (GLEA…KKNR). Basic and acidic residues-rich tracts occupy residues 1050–1063 (EKQK…EALE), 1109–1122 (SPLE…EAPS), 1136–1160 (ESHE…EHVK), 1168–1183 (SCKE…RRVT), and 1191–1201 (LEDKKESREDE). Residues serine 1114, serine 1115, and serine 1122 each carry the phosphoserine modification. Over residues 1211 to 1222 (ENTSQKQPTEQP) the composition is skewed to polar residues. Phosphoserine occurs at positions 1242, 1253, 1261, and 1267. Threonine 1271 carries the phosphothreonine modification. Phosphoserine is present on residues serine 1290, serine 1323, and serine 1331. Residue threonine 1346 is modified to Phosphothreonine. 3 positions are modified to phosphoserine: serine 1354, serine 1356, and serine 1405. The segment covering 1467 to 1478 (AAGEKRTKEPGG) has biased composition (basic and acidic residues). The Phorbol-ester/DAG-type zinc finger occupies 1632–1681 (GHVFASYQVSIPQSCEQCLSYIWLMDKALLCSVCKMTCHKKCVHKIQSHC). Positions 1703–1888 (DSLTSDKASV…MLIKEQMRKY (186 aa)) constitute a Rho-GAP domain. The segment at 1739–1744 (AANRTR) is interaction with RHOA. The stretch at 1880 to 1901 (LIKEQMRKYKVKMEEISQLEAA) forms a coiled coil. Residues serine 1926, serine 1972, serine 1992, and serine 1999 each carry the phosphoserine modification. A coiled-coil region spans residues 1959–1989 (EDREKEILIERIQSIKEEKEDITYRLPELDP). Over residues 1980-1993 (ITYRLPELDPRGSD) the composition is skewed to basic and acidic residues. Positions 1980 to 2157 (ITYRLPELDP…LPPASGQTNG (178 aa)) are disordered. Threonine 2005 carries the post-translational modification Phosphothreonine. The span at 2021–2037 (PPAPALPCPGAPTPSPL) shows a compositional bias: pro residues. Phosphoserine is present on serine 2050. Low complexity predominate over residues 2081–2093 (PRWAPGAREAAAP). The segment covering 2095 to 2106 (RRREPPARRPDQ) has biased composition (basic and acidic residues). Serine 2141 is subject to Phosphoserine.

The protein belongs to the TRAFAC class myosin-kinesin ATPase superfamily. Myosin family. As to quaternary structure, interacts (via IQ domains) with CALM. Interacts with RHOA. Interacts (via Rho-GAP domain) with ROBO1; this inhibits the interaction with RHOA and the stimulation of RHOA GTPase activity, and thereby increases the levels of active RHOA. Detected in peripheral blood leukocytes (at protein level). Expressed predominantly in peripheral blood leukocytes and at lower levels, in thymus, spleen, testis, prostate, ovary, brain, small intestine and lung.

Its subcellular location is the cytoplasm. It is found in the cell cortex. The protein localises to the perinuclear region. The protein resides in the cytoskeleton. Myosins are actin-based motor molecules with ATPase activity. Unconventional myosins serve in intracellular movements. Binds actin with high affinity both in the absence and presence of ATP and its mechanochemical activity is inhibited by calcium ions. Also acts as a GTPase activator for RHOA. Plays a role in the regulation of cell migration via its role as RHOA GTPase activator. This is regulated by its interaction with the SLIT2 receptor ROBO1; interaction with ROBO1 impairs interaction with RHOA and subsequent activation of RHOA GTPase activity, and thereby leads to increased levels of active, GTP-bound RHOA. This chain is Unconventional myosin-IXb (MYO9B), found in Homo sapiens (Human).